The sequence spans 362 residues: Probable S-adenosylmethionine-dependent methyltransferase At5g37970 (362 aa).

6 residues coordinate S-adenosyl-L-homocysteine: Y19, C66, N71, D107, S136, and F137. N175, E261, and F263 together coordinate Mg(2+).

This sequence belongs to the methyltransferase superfamily. Type-7 methyltransferase family. Homodimer. Mg(2+) is required as a cofactor.

The chain is Probable S-adenosylmethionine-dependent methyltransferase At5g37970 from Arabidopsis thaliana (Mouse-ear cress).